A 155-amino-acid polypeptide reads, in one-letter code: Putative pre-16S rRNA nuclease (155 aa).

It belongs to the YqgF nuclease family.

The protein localises to the cytoplasm. In terms of biological role, could be a nuclease involved in processing of the 5'-end of pre-16S rRNA. The polypeptide is Putative pre-16S rRNA nuclease (Wolbachia pipientis wMel).